We begin with the raw amino-acid sequence, 166 residues long: MFPMVTEFMNYGQQTVRAARYIGQGFMITLSHANRLPVTIQYPYEKLITSERFRGRIHFEFDKCIACEVCVRVCPIDLPVVDWKLETDIRKKRLLNYSIDFGICIFCGNCVEYCPTNCLSMTEEYELSTYDRHELNYNQIALGRLPISIIDDYTIRTILNLPEIKT.

2 4Fe-4S ferredoxin-type domains span residues 55–84 (GRIH…VDWK) and 95–124 (LNYS…MTEE). [4Fe-4S] cluster-binding residues include Cys64, Cys67, Cys70, Cys74, Cys104, Cys107, Cys110, and Cys114.

Belongs to the complex I 23 kDa subunit family. As to quaternary structure, NDH is composed of at least 16 different subunits, 5 of which are encoded in the nucleus. It depends on [4Fe-4S] cluster as a cofactor.

It localises to the plastid. It is found in the chloroplast thylakoid membrane. The catalysed reaction is a plastoquinone + NADH + (n+1) H(+)(in) = a plastoquinol + NAD(+) + n H(+)(out). The enzyme catalyses a plastoquinone + NADPH + (n+1) H(+)(in) = a plastoquinol + NADP(+) + n H(+)(out). In terms of biological role, NDH shuttles electrons from NAD(P)H:plastoquinone, via FMN and iron-sulfur (Fe-S) centers, to quinones in the photosynthetic chain and possibly in a chloroplast respiratory chain. The immediate electron acceptor for the enzyme in this species is believed to be plastoquinone. Couples the redox reaction to proton translocation, and thus conserves the redox energy in a proton gradient. The polypeptide is NAD(P)H-quinone oxidoreductase subunit I, chloroplastic (Picradeniopsis absinthifolia (Hairyseed bahia)).